A 60-amino-acid chain; its full sequence is UPF0181 protein PMI1604 (60 aa).

Belongs to the UPF0181 family.

This Proteus mirabilis (strain HI4320) protein is UPF0181 protein PMI1604.